The chain runs to 361 residues: Core-capsid bridging protein (361 aa).

Over residues 311-321 (RRRRVARRSKS) the composition is skewed to basic residues. Residues 311 to 331 (RRRRVARRSKSTGRFVAAPRK) form a disordered region.

The protein belongs to the adenoviridae core-capsid bridging protein family. In terms of assembly, monomer. Homodimer. Exists in equilibrium between monomers and dimers in solution. Interacts with the histone-like nucleoprotein; this interactions bridge the virus core to the capsid. Interacts with core protein X; this interactions bridge the virus core to the capsid. Interacts with the endosome lysis protein VI; this interactions bridge the virus core to the capsid. Interacts with the peripentonal hexons. Interacts with host NPM1; this interaction might play a role in virus assembly.

Its subcellular location is the virion. It is found in the host nucleus. The protein resides in the host nucleolus. Functionally, associates loosely with the viral DNA to form an outer shell around the nucleoprotein-DNA complex and links it with the capsid by binding the endosome lysis protein. Dissociates from the viral genome during entry. Might be involved in nuclear capsid assembly of the viral particles through its association with NPM1/nucleophosmin. The polypeptide is Core-capsid bridging protein (Bovine adenovirus 2 (BAdV-2)).